The following is a 186-amino-acid chain: ADP-ribosylation factor-like protein 6 (186 aa).

The N-myristoyl glycine moiety is linked to residue Gly2. Residues 24–31, Thr50, 69–73, Gly72, 130–133, and Ala164 contribute to the GTP site; these read GLDNSGKT, DMSGQ, and NKMD. Position 50 (Thr50) interacts with Mg(2+).

This sequence belongs to the small GTPase superfamily. Arf family. Expressed in brain, heart and eye. Isoform 2 is expressed only in the retina.

Its subcellular location is the cell projection. The protein resides in the cilium membrane. It localises to the cytoplasm. The protein localises to the cytoskeleton. It is found in the cilium axoneme. Its subcellular location is the cilium basal body. Functionally, probably involved in membrane protein trafficking at the base of the ciliary organelle. May function in cilia biogenesis. Isoform 2 is required for proper retinal function and organization. This Danio rerio (Zebrafish) protein is ADP-ribosylation factor-like protein 6 (arl6).